Consider the following 809-residue polypeptide: Putative zinc metalloprotease TRE2 (809 aa).

Composition is skewed to polar residues over residues 1–12 (MRSSYQPVSTTN) and 20–30 (PTASSSHNLLM). The segment at 1–66 (MRSSYQPVST…PSYEFDIEDP (66 aa)) is disordered. Topologically, residues 1-125 (MRSSYQPVST…KIGNPFILRR (125 aa)) are cytoplasmic. Over residues 37–50 (SPPSSNDNSIETNI) the composition is skewed to low complexity. Residues 126–146 (FFYIIFMSFIAYYVLSSGYLF) traverse the membrane as a helical; Signal-anchor for type II membrane protein segment. Over 147 to 809 (NEKASGSKGM…VEETNDIGYK (663 aa)) the chain is Extracellular. N-linked (GlcNAc...) asparagine glycosylation is present at Asn228. The PA domain occupies 255 to 349 (SNGKLSKVSL…STGDASGLNW (95 aa)). 2 N-linked (GlcNAc...) asparagine glycosylation sites follow: Asn669 and Asn736.

It belongs to the peptidase M28 family. M28B subfamily.

The protein localises to the membrane. This is Putative zinc metalloprotease TRE2 (TRE2) from Saccharomyces cerevisiae (strain ATCC 204508 / S288c) (Baker's yeast).